A 24-amino-acid polypeptide reads, in one-letter code: General odorant-binding protein (24 aa).

This sequence belongs to the PBP/GOBP family. In terms of assembly, homodimer. As to expression, antenna.

Functionally, present in the aqueous fluid surrounding olfactory sensory dendrites and are thought to aid in the capture and transport of hydrophobic odorants into and through this fluid. In Antheraea polyphemus (Polyphemus moth), this protein is General odorant-binding protein.